The following is a 272-amino-acid chain: uncharacterized protein (272 aa).

Composition is skewed to basic and acidic residues over residues 136–156 (VRRE…HIDI) and 231–240 (GCKESRRNEP). Disordered stretches follow at residues 136–157 (VRRE…IDIH) and 174–272 (VKPK…WAAF). Polar residues predominate over residues 243–252 (DLSQLKKNLP). The segment covering 253-272 (STAGSGSSKSTGAASGWAAF) has biased composition (low complexity).

This is an uncharacterized protein from Arabidopsis thaliana (Mouse-ear cress).